Consider the following 495-residue polypeptide: Lanosterol 14-alpha demethylase erg11 (495 aa).

The chain crosses the membrane as a helical span at residues 2–22; that stretch reads AFSLVSILLSIALAWYVGYII. C442 lines the heme pocket.

It belongs to the cytochrome P450 family. In terms of assembly, interacts with dap1. Heme serves as cofactor.

Its subcellular location is the endoplasmic reticulum. It localises to the membrane. It carries out the reaction a 14alpha-methyl steroid + 3 reduced [NADPH--hemoprotein reductase] + 3 O2 = a Delta(14) steroid + formate + 3 oxidized [NADPH--hemoprotein reductase] + 4 H2O + 4 H(+). The enzyme catalyses a 14alpha-methyl steroid + reduced [NADPH--hemoprotein reductase] + O2 = a 14alpha-hydroxymethyl steroid + oxidized [NADPH--hemoprotein reductase] + H2O + H(+). The catalysed reaction is a 14alpha-hydroxymethyl steroid + reduced [NADPH--hemoprotein reductase] + O2 = a 14alpha-formyl steroid + oxidized [NADPH--hemoprotein reductase] + 2 H2O + H(+). It catalyses the reaction a 14alpha-formyl steroid + reduced [NADPH--hemoprotein reductase] + O2 = a Delta(14) steroid + formate + oxidized [NADPH--hemoprotein reductase] + H2O + 2 H(+). It carries out the reaction lanosterol + 3 reduced [NADPH--hemoprotein reductase] + 3 O2 = 4,4-dimethyl-5alpha-cholesta-8,14,24-trien-3beta-ol + formate + 3 oxidized [NADPH--hemoprotein reductase] + 4 H2O + 4 H(+). The enzyme catalyses lanosterol + reduced [NADPH--hemoprotein reductase] + O2 = 32-hydroxylanosterol + oxidized [NADPH--hemoprotein reductase] + H2O + H(+). The catalysed reaction is 32-hydroxylanosterol + reduced [NADPH--hemoprotein reductase] + O2 = 32-oxolanosterol + oxidized [NADPH--hemoprotein reductase] + 2 H2O + H(+). It catalyses the reaction 32-oxolanosterol + reduced [NADPH--hemoprotein reductase] + O2 = 4,4-dimethyl-5alpha-cholesta-8,14,24-trien-3beta-ol + formate + oxidized [NADPH--hemoprotein reductase] + H2O + 2 H(+). It carries out the reaction eburicol + 3 reduced [NADPH--hemoprotein reductase] + 3 O2 = 14-demethyleburicol + formate + 3 oxidized [NADPH--hemoprotein reductase] + 4 H2O + 4 H(+). The enzyme catalyses eburicol + reduced [NADPH--hemoprotein reductase] + O2 = 32-hydroxyeburicol + oxidized [NADPH--hemoprotein reductase] + H2O + H(+). The catalysed reaction is 32-hydroxyeburicol + reduced [NADPH--hemoprotein reductase] + O2 = 32-oxoeburicol + oxidized [NADPH--hemoprotein reductase] + 2 H2O + H(+). It catalyses the reaction 32-oxoeburicol + reduced [NADPH--hemoprotein reductase] + O2 = 14-demethyleburicol + formate + oxidized [NADPH--hemoprotein reductase] + H2O + 2 H(+). It functions in the pathway steroid biosynthesis; zymosterol biosynthesis; zymosterol from lanosterol: step 1/6. Its pathway is steroid metabolism; ergosterol biosynthesis. Functionally, sterol 14alpha-demethylase that plays a critical role in the third module of ergosterol biosynthesis pathway, being ergosterol the major sterol component in fungal membranes that participates in a variety of functions. The third module or late pathway involves the ergosterol synthesis itself through consecutive reactions that mainly occur in the endoplasmic reticulum (ER) membrane. In filamentous fungi, during the initial step of this module, lanosterol (lanosta-8,24-dien-3beta-ol) can be metabolized to eburicol. Sterol 14alpha-demethylase catalyzes the three-step oxidative removal of the 14alpha-methyl group (C-32) of both these sterols in the form of formate, and converts eburicol and lanosterol to 14-demethyleburicol (4,4,24-trimethylergosta-8,14,24(28)-trienol) and 4,4-dimethyl-5alpha-cholesta-8,14,24-trien-3beta-ol, respectively, which are further metabolized by other enzymes in the pathway to ergosterol. Can also use substrates not intrinsic to fungi, such as 24,25-dihydrolanosterol (DHL), producing 4,4-dimethyl-8,14-cholestadien-3-beta-ol, but at lower rates than the endogenous substrates. This Schizosaccharomyces pombe (strain 972 / ATCC 24843) (Fission yeast) protein is Lanosterol 14-alpha demethylase erg11.